Consider the following 388-residue polypeptide: 3-dehydroquinate synthase (388 aa).

Belongs to the archaeal-type DHQ synthase family.

It carries out the reaction 2-amino-2,3,7-trideoxy-D-lyxo-hept-6-ulosonate + NAD(+) + H2O = 3-dehydroquinate + NH4(+) + NADH + H(+). In terms of biological role, catalyzes the oxidative deamination and cyclization of 2-amino-3,7-dideoxy-D-threo-hept-6-ulosonic acid (ADH) to yield 3-dehydroquinate (DHQ), which is fed into the canonical shikimic pathway of aromatic amino acid biosynthesis. This is 3-dehydroquinate synthase from Haloarcula marismortui (strain ATCC 43049 / DSM 3752 / JCM 8966 / VKM B-1809) (Halobacterium marismortui).